The chain runs to 206 residues: TPR repeat-containing protein YrrB (206 aa).

6 TPR repeats span residues 1 to 23, 24 to 57, 59 to 91, 93 to 125, 127 to 159, and 160 to 193; these read MQEG…NKED, AIPY…DSSA, TAYY…GMEN, DLFY…NEND, EARF…DPGH, and ADAF…QPDH.

In terms of assembly, monomer.

In terms of biological role, could be an interacting mediator in the complex formation among RNA sulfuration components, RNA processing components, and aminoacyl-tRNA synthetases. This is TPR repeat-containing protein YrrB (yrrB) from Bacillus subtilis (strain 168).